The following is a 157-amino-acid chain: Root allergen protein (157 aa).

Belongs to the BetVI family.

This is Root allergen protein from Taraxacum officinale (Common dandelion).